Consider the following 142-residue polypeptide: DPDGCGPGWVPTPGGCLGFFSRELSWSRAESFCRRWGPGSHLAAVRSAAELRLLAELLNASRGGDGSGEGADGRVWIGLHRPAGSRSWRWSDGTAPRFASWHRTAKARRGGRCAALRDEEAFTSWAARPCTERNAFVCKAAA.

Disulfide bonds link Cys-5–Cys-16, Cys-33–Cys-138, and Cys-113–Cys-130. The region spanning 12-139 (TPGGCLGFFS…CTERNAFVCK (128 aa)) is the C-type lectin domain. Asn-59 carries N-linked (GlcNAc...) asparagine glycosylation. Ser-61 and Ser-67 each carry phosphoserine.

As to expression, expressed in the shell gland mucosa. Not detected in hen liver, magnum, isthmus, cartilage, bone or in egg white or yolk.

Its subcellular location is the secreted. The protein localises to the extracellular space. The protein resides in the extracellular matrix. May form proteinaceous networks during the construction of the eggshell which then may control the deposition of the mineral phase. This is Ovocleidin-17 from Gallus gallus (Chicken).